Reading from the N-terminus, the 177-residue chain is Large ribosomal subunit protein uL6 (177 aa).

Residue Lys44 is modified to N6-acetyllysine.

The protein belongs to the universal ribosomal protein uL6 family. As to quaternary structure, part of the 50S ribosomal subunit.

This protein binds to the 23S rRNA, and is important in its secondary structure. It is located near the subunit interface in the base of the L7/L12 stalk, and near the tRNA binding site of the peptidyltransferase center. The chain is Large ribosomal subunit protein uL6 from Escherichia fergusonii (strain ATCC 35469 / DSM 13698 / CCUG 18766 / IAM 14443 / JCM 21226 / LMG 7866 / NBRC 102419 / NCTC 12128 / CDC 0568-73).